The primary structure comprises 256 residues: Chitinase 11 (256 aa).

Residues 1–22 form the signal peptide; the sequence is MRRLLPLAGATLLIAAAGGASG. 2 disulfides stabilise this stretch: C48/C109 and C214/C247. E91 (proton donor) is an active-site residue.

The protein belongs to the glycosyl hydrolase 19 family. Chitinase class II subfamily. As to expression, expressed in leaves and at lower levels in roots, sheaths and meristems.

It carries out the reaction Random endo-hydrolysis of N-acetyl-beta-D-glucosaminide (1-&gt;4)-beta-linkages in chitin and chitodextrins.. The protein is Chitinase 11 (Cht11) of Oryza sativa subsp. japonica (Rice).